We begin with the raw amino-acid sequence, 483 residues long: Essential nuclear protein 1 (483 aa).

Disordered regions lie at residues 1-21 (MARA…LKDL), 33-55 (KKKL…GYID), 67-123 (KEQQ…EGDY), and 171-200 (ESQV…GLKS). The segment covering 96–123 (YDDEDEDEDEDEEAFGEDISDFEPEGDY) has biased composition (acidic residues). The residue at position 172 (Ser-172) is a Phosphoserine; by ATM or ATR. Residues 174–183 (VEDMQDDEPL) are compositionally biased toward acidic residues. The segment covering 185 to 198 (NEQNTSRGNISSGL) has biased composition (polar residues). A phosphoserine mark is found at Ser-190 and Ser-404.

The protein belongs to the bystin family.

The protein resides in the cytoplasm. The protein localises to the nucleus. Its subcellular location is the nucleolus. Its function is as follows. Required for normal export of the pre-40S particles from the nucleus to the cytoplasm. Its subcellular location and association with pre-40S subunit shifts from mixed cytoplasm/nucleus to all nuclear in RPS19 disruptions, suggesting it acts after the ribosomal protein. The sequence is that of Essential nuclear protein 1 (ENP1) from Saccharomyces cerevisiae (strain ATCC 204508 / S288c) (Baker's yeast).